Reading from the N-terminus, the 602-residue chain is DNA ligase (602 aa).

E262 provides a ligand contact to ATP. Catalysis depends on K264, which acts as the N6-AMP-lysine intermediate. ATP contacts are provided by R269, R284, E314, F354, R431, and K437.

The protein belongs to the ATP-dependent DNA ligase family. In terms of assembly, monomer. Mg(2+) serves as cofactor. Requires Mn(2+) as cofactor.

It carries out the reaction ATP + (deoxyribonucleotide)n-3'-hydroxyl + 5'-phospho-(deoxyribonucleotide)m = (deoxyribonucleotide)n+m + AMP + diphosphate.. It catalyses the reaction ADP + (deoxyribonucleotide)n-3'-hydroxyl + 5'-phospho-(deoxyribonucleotide)m = (deoxyribonucleotide)n+m + AMP + phosphate.. The enzyme catalyses GTP + (deoxyribonucleotide)n-3'-hydroxyl + 5'-phospho-(deoxyribonucleotide)m = (deoxyribonucleotide)n+m + GMP + diphosphate.. With respect to regulation, inhibited in the presence of 100 mM KCl, NaCl or NH(4)Cl. DNA ligase that seals nicks in double-stranded DNA during DNA replication, DNA recombination and DNA repair. Can also use ADP, but not NAD(+). The protein is DNA ligase of Aeropyrum pernix (strain ATCC 700893 / DSM 11879 / JCM 9820 / NBRC 100138 / K1).